Reading from the N-terminus, the 267-residue chain is Tetrahydromethanopterin S-methyltransferase subunit C (267 aa).

7 consecutive transmembrane segments (helical) span residues 19-39 (IMAL…FAPP), 75-95 (IGML…SVGG), 97-117 (AGPI…GALA), 140-160 (TLVI…ASVV), 162-182 (YVVA…GILH), 198-218 (LMLA…ASSL), and 221-241 (GLMA…VAFS).

Belongs to the MtrC family. As to quaternary structure, the complex is composed of 8 subunits; MtrA, MtrB, MtrC, MtrD, MtrE, MtrF, MtrG and MtrH.

Its subcellular location is the cell membrane. The catalysed reaction is 5-methyl-5,6,7,8-tetrahydromethanopterin + coenzyme M + 2 Na(+)(in) = 5,6,7,8-tetrahydromethanopterin + methyl-coenzyme M + 2 Na(+)(out). It functions in the pathway one-carbon metabolism; methanogenesis from CO(2); methyl-coenzyme M from 5,10-methylene-5,6,7,8-tetrahydromethanopterin: step 2/2. Its function is as follows. Part of a complex that catalyzes the formation of methyl-coenzyme M and tetrahydromethanopterin from coenzyme M and methyl-tetrahydromethanopterin. This is an energy-conserving, sodium-ion translocating step. This Methanosarcina barkeri (strain Fusaro / DSM 804) protein is Tetrahydromethanopterin S-methyltransferase subunit C.